Reading from the N-terminus, the 73-residue chain is Bacterioferritin-associated ferredoxin (73 aa).

[2Fe-2S] cluster-binding residues include cysteine 4 and cysteine 6. 2 residues coordinate phosphate: arginine 26 and arginine 29. Positions 38 and 41 each coordinate [2Fe-2S] cluster. Residue lysine 46 participates in phosphate binding.

The protein belongs to the Bfd family. Monomer. Interacts with BfrB; up to 12 Bfd proteins can bind to the BfrB bacterioferritin complex (BFR). One Bfd protein binds to a BfrB dimer in the BFR, with the [2Fe-2S] cluster positioned about 22 Angstroms above the heme of BfrB. Does not interact with FtnA. [2Fe-2S] cluster is required as a cofactor. Requires phosphate as cofactor.

In terms of biological role, required for mobilization of iron from the bacterioferritin (BFR) complex, composed of BfrB and FtnA in varying proportions; mobilization requires the [2Fe-2S] cluster of this protein. Reduction of the BfrB heme group occurs in the presence of Bfd, strongly suggesting that the BfrB-Bfd complex allows heme to mediate electron transfer from FPR to the Fe(3+) iron core in the BFR prior to its release as Fe(2+). The sequence is that of Bacterioferritin-associated ferredoxin from Pseudomonas aeruginosa (strain ATCC 15692 / DSM 22644 / CIP 104116 / JCM 14847 / LMG 12228 / 1C / PRS 101 / PAO1).